Reading from the N-terminus, the 82-residue chain is Sec-independent protein translocase protein TatA (82 aa).

A helical membrane pass occupies residues 1–21 (MGSFSIWHWLIVLLVVVMIFG). A disordered region spans residues 39-82 (FKDGMKDGSTTDAPAASSAPAAQVTGQPANSDKSTIDVEARQKS). Positions 51–60 (APAASSAPAA) are enriched in low complexity. A compositionally biased stretch (polar residues) spans 62–71 (VTGQPANSDK). The span at 72-82 (STIDVEARQKS) shows a compositional bias: basic and acidic residues.

This sequence belongs to the TatA/E family. The Tat system comprises two distinct complexes: a TatABC complex, containing multiple copies of TatA, TatB and TatC subunits, and a separate TatA complex, containing only TatA subunits. Substrates initially bind to the TatABC complex, which probably triggers association of the separate TatA complex to form the active translocon.

The protein localises to the cell inner membrane. Functionally, part of the twin-arginine translocation (Tat) system that transports large folded proteins containing a characteristic twin-arginine motif in their signal peptide across membranes. TatA could form the protein-conducting channel of the Tat system. The protein is Sec-independent protein translocase protein TatA of Variovorax paradoxus (strain S110).